We begin with the raw amino-acid sequence, 149 residues long: Extracellular protease inhibitor 1 (149 aa).

An N-terminal signal peptide occupies residues 1 to 16 (MKSALLFTLVVAAVHA). 2 Kazal-like domains span residues 29 to 86 (ESNE…SSTG) and 88 to 141 (QPPS…ACVG). Cystine bridges form between C35/C65 and C39/C58. An N-linked (GlcNAc...) asparagine glycan is attached at N67. 3 disulfides stabilise this stretch: C94–C124, C98–C117, and C106–C139.

In terms of assembly, interacts with host subtilisin-like protease P69B.

Its subcellular location is the secreted. Functionally, secreted effector that interacts with and inhibits the pathogenesis-related P69B subtilisin-like serine protease of host tomato. Inhibition of host proteases by a pathogen extracellular protease inhibitor forms a specific type of defense-counterdefense mechanism between plants and microbial pathogens. The sequence is that of Extracellular protease inhibitor 1 from Phytophthora infestans (Potato late blight agent).